The primary structure comprises 962 residues: Thrombospondin-3a (962 aa).

The N-terminal stretch at 1 to 23 (MEQMFVHIWVSLVVLMSVWSAQS) is a signal peptide. The 173-residue stretch at 24 to 196 (DKKQDVPVID…MDTLKLALGG (173 aa)) folds into the Laminin G-like domain. The EGF-like 1 domain occupies 277 to 318 (PRSRCQPNPCFKGVSCMETFEYPGYRCGPCPDGMTGNGTHCQ). 20 disulfide bridges follow: C281–C292, C286–C303, C306–C317, C323–C335, C329–C344, C347–C371, C377–C390, C384–C399, C402–C414, C420–C434, C428–C444, C446–C457, C473–C480, C485–C505, C521–C541, C544–C564, C580–C600, C603–C623, C641–C661, and C684–C704. An N-linked (GlcNAc...) asparagine glycan is attached at N313. The region spanning 319-358 (DIDECSEAQPCYTPGACVNTARGFTCESCPPGMWGPPLSG) is the EGF-like 2; calcium-binding domain. An EGF-like 3; calcium-binding domain is found at 373–412 (DIDECVDLANACTPNSVCINIIGSFRCGQCKTGYVGNQTA). A glycan (N-linked (GlcNAc...) asparagine) is linked at N409. Positions 416 to 458 (PRKSCSSLSFNPCDANAHCVMQRNGDVSCACNVGWAGNGHTCG) constitute an EGF-like 4 domain. TSP type-3 repeat units lie at residues 459–493 (KDTDIDGYPDRSLPCMDNHKHCRQDNCVYTPNSGQ), 494–529 (EDADNDGIGDQCDEDADGDGIKNVEDNCRLVSNKDQ), 530–552 (QNSDTDSFGDACDNCPTVPNIDQ), 553–588 (KDTDSNGEGDACDDDIDGDGIQNVLDNCPKVPNPMQ), 589–611 (TDRDRDGVGDACDSCPEISNPMQ), 612–649 (TDVDNDLVGDVCDTNQDTDGDGHQDTRDNCPDIPNSSQ), 650–692 (LDSD…NPNQ), and 693–728 (KDSDSNGVGDVCENDFDNDSVMDLVDVCPESAEVTL). Positions 548–704 (PNIDQKDTDS…SDSNGVGDVC (157 aa)) are disordered. Over residues 557–570 (SNGEGDACDDDIDG) the composition is skewed to acidic residues. Over residues 631-641 (GDGHQDTRDNC) the composition is skewed to basic and acidic residues. N646 carries N-linked (GlcNAc...) asparagine glycosylation. Acidic residues predominate over residues 652–669 (SDNDGIGDDCDEDDDNDG). An N-linked (GlcNAc...) asparagine glycan is attached at N710. A disulfide bond links C720 and C941. One can recognise a TSP C-terminal domain in the interval 732-946 (RAYQTVILDP…LRYRCNDTVP (215 aa)). N-linked (GlcNAc...) asparagine glycosylation occurs at N942.

It belongs to the thrombospondin family. As to quaternary structure, oligomer; disulfide-linked.

In terms of biological role, adhesive glycoprotein that mediates cell-to-cell and cell-to-matrix interactions. Can bind to fibrinogen, fibronectin, laminin and type V collagen. The polypeptide is Thrombospondin-3a (thbs3a) (Danio rerio (Zebrafish)).